The chain runs to 90 residues: Small ribosomal subunit protein uS19 (90 aa).

The protein belongs to the universal ribosomal protein uS19 family.

Its function is as follows. Protein S19 forms a complex with S13 that binds strongly to the 16S ribosomal RNA. This chain is Small ribosomal subunit protein uS19, found in Mesomycoplasma hyopneumoniae (strain 232) (Mycoplasma hyopneumoniae).